A 485-amino-acid polypeptide reads, in one-letter code: MTNKVRTRFAPSPTGYMHVGNLRTALYAYLIAKHDNGDFILRIEDTDQERLVEGALDVIYNTLKITGLSHDEGPDIGGPVGPYVQSERRNIYIEYAEKLIEKGEAYYCFCSKERLDMLRANSEALKRPFRYDKHCIDLSKEEIDKKIAEGVPYVIRQKNPTTGSTSFHDEIYGDISVDNSELDDMILIKSDGLPTYNFANVVDDHLMGITHVVRGSEYLSSSPKYNRLYEAFGWDVPIYVHCPPIMKDEHHKLSKRNGDASFEDLMAKGYLKEAILNYIALLGWNPGGEKEVFSMEELIEAFNYRNINKAPAVFDTKKLKWMNGEYIRALSLDKFHEMALPYYEEALTRDLDTKKISELLHTRVEVLNEIPEQLDFFNNLLEYSPEMYIHKKMKTTYENSLKSLEEVLPKLEALENWTFENIKEVCMNLVKELEVKNGVVLWPIRTAVSGKQFTPGGAFEIADILGKEETLERIKIGIDKLKALQ.

The 'HIGH' region signature appears at 11–21; that stretch reads PSPTGYMHVGN. Zn(2+)-binding residues include C108, C110, C135, and D137. Positions 252-256 match the 'KMSKS' region motif; that stretch reads KLSKR. K255 contributes to the ATP binding site.

The protein belongs to the class-I aminoacyl-tRNA synthetase family. Glutamate--tRNA ligase type 1 subfamily. As to quaternary structure, monomer. Requires Zn(2+) as cofactor.

The protein resides in the cytoplasm. The enzyme catalyses tRNA(Glu) + L-glutamate + ATP = L-glutamyl-tRNA(Glu) + AMP + diphosphate. Functionally, catalyzes the attachment of glutamate to tRNA(Glu) in a two-step reaction: glutamate is first activated by ATP to form Glu-AMP and then transferred to the acceptor end of tRNA(Glu). The chain is Glutamate--tRNA ligase from Clostridium botulinum (strain ATCC 19397 / Type A).